The following is a 130-amino-acid chain: MSMTDPISDMLTRVRNGQNAGKVEVSMPSSKLKVSIARVLKEEGYIEDCKVIADAKPTLVIRLKYYGGKPVIEDIHRASRPGLRMYKSRDKLPRIRGGLGIAIVSTSRGVMTDKTARSIGEGGEVLCYVA.

This sequence belongs to the universal ribosomal protein uS8 family. As to quaternary structure, part of the 30S ribosomal subunit. Contacts proteins S5 and S12.

Its function is as follows. One of the primary rRNA binding proteins, it binds directly to 16S rRNA central domain where it helps coordinate assembly of the platform of the 30S subunit. The chain is Small ribosomal subunit protein uS8 from Nitrosococcus oceani (strain ATCC 19707 / BCRC 17464 / JCM 30415 / NCIMB 11848 / C-107).